The chain runs to 181 residues: Der GTPase-activating protein YihI (181 aa).

The interval 1-73 (MSRIKKARKP…DPRIGSKKPI (73 aa)) is disordered. Over residues 22 to 32 (NRTDRDVESRE) the composition is skewed to basic and acidic residues. A compositionally biased stretch (basic residues) spans 33-42 (LKRKRKRKGL). Positions 55–67 (QARRNAQKKDPRI) are enriched in basic and acidic residues.

Belongs to the YihI family. Interacts with Der.

Its function is as follows. A GTPase-activating protein (GAP) that modifies Der/EngA GTPase function. May play a role in ribosome biogenesis. This chain is Der GTPase-activating protein YihI, found in Aliivibrio fischeri (strain MJ11) (Vibrio fischeri).